The chain runs to 176 residues: NADH-dependent flavin reductase (176 aa).

FAD contacts are provided by residues 39–46 and 48–49; these read EDSVHGMT and NA. Residue Ser-52 coordinates NAD(+). Residues 63-65, 69-70, and 95-96 contribute to the FAD site; these read SIS, KM, and HF. Residues His-137 and 157–160 each bind NAD(+); that span reads FYTG.

Belongs to the non-flavoprotein flavin reductase family. In terms of assembly, homodimer. 4-nitrophenol 2-monooxygenase complex consists of an oxygenase component NphA1 and a flavin reductase component NphA2.

It carries out the reaction a reduced flavin + NAD(+) = an oxidized flavin + NADH + 2 H(+). Catalyzes the reduction of FAD with the concomitant oxidation of NADH. NAD is the physiological electron donor. Subsequently, the reduced flavins diffuse to the oxygenase component NphA2. This Rhodococcus sp protein is NADH-dependent flavin reductase (nphA2).